A 133-amino-acid chain; its full sequence is Adenosine 5'-monophosphoramidase hnt1 (133 aa).

An HIT domain is found at 4–107 (IFCKIVKGDI…IPKPNEEYGL (104 aa)). AMP is bound by residues 29–30 (DI), asparagine 81, 87–89 (HQF), and 94–96 (HFH). A Histidine triad motif motif is present at residues 92–96 (HVHFH). Histidine 94 (tele-AMP-histidine intermediate) is an active-site residue.

It belongs to the HINT family. In terms of assembly, homodimer. Mg(2+) serves as cofactor.

It localises to the nucleus. The enzyme catalyses adenosine 5'-phosphoramidate + H2O = AMP + NH4(+). Its function is as follows. Hydrolyzes adenosine 5'-monophosphoramidate substrates such as AMP-morpholidate, AMP-N-alanine methyl ester, AMP-alpha-acetyl lysine methyl ester and AMP-NH2. This Schizosaccharomyces pombe (strain 972 / ATCC 24843) (Fission yeast) protein is Adenosine 5'-monophosphoramidase hnt1 (hnt1).